Here is a 767-residue protein sequence, read N- to C-terminus: Protein NLP3 (767 aa).

Disordered stretches follow at residues alanine 462–lysine 494, isoleucine 590–glutamate 622, and histidine 646–aspartate 672. One can recognise an RWP-RK domain in the interval serine 482–serine 566. The stretch at serine 485–glutamine 506 forms a coiled coil. Low complexity-rich tracts occupy residues proline 604–glutamate 622 and threonine 655–proline 667. Residues glycine 673–proline 759 enclose the PB1 domain.

The protein resides in the nucleus. Its function is as follows. Probable transcription factor. This chain is Protein NLP3 (NLP3), found in Arabidopsis thaliana (Mouse-ear cress).